The following is a 504-amino-acid chain: Catalase (504 aa).

The N-terminal stretch at M1–A21 is a signal peptide. Catalysis depends on residues H72 and N145. A heme-binding site is contributed by Y353.

The protein belongs to the catalase family. Heme serves as cofactor.

Its subcellular location is the periplasm. The enzyme catalyses 2 H2O2 = O2 + 2 H2O. Its function is as follows. Decomposes hydrogen peroxide into water and oxygen; serves to protect cells from the toxic effects of hydrogen peroxide. The sequence is that of Catalase from Vibrio parahaemolyticus serotype O3:K6 (strain RIMD 2210633).